A 300-amino-acid polypeptide reads, in one-letter code: MSAAPPVAVSAPSRLRQFYALTKPRVVQLIVFCALIGMVLAVPGLPSAAQWGRIAWACAGVWLVAGAAAAFNCIVEQGIDAKMKRTAWRPTARGELSNAQTLLFSALLCVAGSALLYFLVNPLTMWLTFATFVGYAVIYTLILKPLTPQNIVIGGASGAMPPVLGWAAMTNTVGPEALILFLIIFLWTPPHFWALALYRVEEYRQSGLPMLPVTHGSAFTRLQVLLYTLILFAACLMPFIYGMSSWPYLAAAVLLGAGFCGYGFALWRNYSDALARKTFRFSLIHLSALFAALLLDHYLP.

The next 9 membrane-spanning stretches (helical) occupy residues 26 to 46, 54 to 74, 102 to 122, 123 to 143, 150 to 170, 177 to 197, 224 to 244, 246 to 266, and 279 to 299; these read VVQL…PGLP, IAWA…FNCI, LLFS…LVNP, LTMW…TLIL, NIVI…AAMT, ALIL…ALAL, VLLY…YGMS, WPYL…GFAL, and FRFS…DHYL.

Belongs to the UbiA prenyltransferase family. Protoheme IX farnesyltransferase subfamily.

It localises to the cell inner membrane. The catalysed reaction is heme b + (2E,6E)-farnesyl diphosphate + H2O = Fe(II)-heme o + diphosphate. Its pathway is porphyrin-containing compound metabolism; heme O biosynthesis; heme O from protoheme: step 1/1. In terms of biological role, converts heme B (protoheme IX) to heme O by substitution of the vinyl group on carbon 2 of heme B porphyrin ring with a hydroxyethyl farnesyl side group. The chain is Protoheme IX farnesyltransferase from Verminephrobacter eiseniae (strain EF01-2).